A 318-amino-acid polypeptide reads, in one-letter code: Carbamate kinase (318 aa).

The protein belongs to the carbamate kinase family.

Its subcellular location is the cytoplasm. The enzyme catalyses hydrogencarbonate + NH4(+) + ATP = carbamoyl phosphate + ADP + H2O + H(+). It participates in metabolic intermediate metabolism; carbamoyl phosphate degradation; CO(2) and NH(3) from carbamoyl phosphate: step 1/1. The polypeptide is Carbamate kinase (arcC) (Lentilactobacillus hilgardii (Lactobacillus hilgardii)).